Reading from the N-terminus, the 206-residue chain is Protein GrpE (206 aa).

It belongs to the GrpE family. As to quaternary structure, homodimer.

Its subcellular location is the cytoplasm. Participates actively in the response to hyperosmotic and heat shock by preventing the aggregation of stress-denatured proteins, in association with DnaK and GrpE. It is the nucleotide exchange factor for DnaK and may function as a thermosensor. Unfolded proteins bind initially to DnaJ; upon interaction with the DnaJ-bound protein, DnaK hydrolyzes its bound ATP, resulting in the formation of a stable complex. GrpE releases ADP from DnaK; ATP binding to DnaK triggers the release of the substrate protein, thus completing the reaction cycle. Several rounds of ATP-dependent interactions between DnaJ, DnaK and GrpE are required for fully efficient folding. This Shewanella sp. (strain W3-18-1) protein is Protein GrpE.